A 218-amino-acid polypeptide reads, in one-letter code: NAD(P)H-quinone oxidoreductase subunit U, chloroplastic (218 aa).

A chloroplast-targeting transit peptide spans 1 to 53 (MASLSTITQPSLVHIPGESVLHHVPSTCSFPWKPTINTKRIICSPARNSSEVS). A disordered region spans residues 47-72 (RNSSEVSAEAETEGGSSTAVDEAPKE). The J domain occupies 95–159 (DHYGRLGIFR…EERRMYDWSL (65 aa)). A helical membrane pass occupies residues 197-217 (ILGYFIGAWLVLGVALSVAFN).

In terms of assembly, part of the chloroplast NDH complex, composed of a mixture of chloroplast and nucleus encoded subunits. Component of the electron donor-binding subcomplex, at least composed of NDHS, NDHT and NDHU.

The protein localises to the plastid. The protein resides in the chloroplast thylakoid membrane. The catalysed reaction is a plastoquinone + NADH + (n+1) H(+)(in) = a plastoquinol + NAD(+) + n H(+)(out). The enzyme catalyses a plastoquinone + NADPH + (n+1) H(+)(in) = a plastoquinol + NADP(+) + n H(+)(out). NDH shuttles electrons from NAD(P)H:plastoquinone, via FMN and iron-sulfur (Fe-S) centers, to quinones in the photosynthetic chain and possibly in a chloroplast respiratory chain. The immediate electron acceptor for the enzyme in this species is believed to be plastoquinone. Couples the redox reaction to proton translocation, and thus conserves the redox energy in a proton gradient. This is NAD(P)H-quinone oxidoreductase subunit U, chloroplastic from Arabidopsis thaliana (Mouse-ear cress).